Here is a 283-residue protein sequence, read N- to C-terminus: Fructose-1,6-bisphosphatase class 1 (283 aa).

The Mg(2+) site is built by glutamate 67, aspartate 86, leucine 88, and aspartate 89. Residues aspartate 89–serine 92, tyrosine 195, and lysine 225 contribute to the substrate site. Glutamate 231 contributes to the Mg(2+) binding site.

This sequence belongs to the FBPase class 1 family. As to quaternary structure, homotetramer. Mg(2+) is required as a cofactor.

It localises to the cytoplasm. The catalysed reaction is beta-D-fructose 1,6-bisphosphate + H2O = beta-D-fructose 6-phosphate + phosphate. The protein operates within carbohydrate biosynthesis; gluconeogenesis. The sequence is that of Fructose-1,6-bisphosphatase class 1 from Natronomonas pharaonis (strain ATCC 35678 / DSM 2160 / CIP 103997 / JCM 8858 / NBRC 14720 / NCIMB 2260 / Gabara) (Halobacterium pharaonis).